The sequence spans 627 residues: (R)-linalool synthase 1, chloroplastic (627 aa).

A chloroplast-targeting transit peptide spans 1–21 (MAFVSIAPLASRCCVHKSFVS). Residues D378, D382, and E530 each contribute to the Mg(2+) site. Positions 378–382 (DDIYD) match the DDXXD motif motif.

It belongs to the terpene synthase family. Tpsd subfamily. The cofactor is Mg(2+). Mn(2+) is required as a cofactor.

It localises to the plastid. The protein localises to the chloroplast. The enzyme catalyses (2E)-geranyl diphosphate + H2O = (R)-linalool + diphosphate. The protein operates within terpene metabolism; oleoresin biosynthesis. Its function is as follows. Terpene synthase (TPS) involved in the biosynthesis of monoterpene natural products included in conifer oleoresin secretions and volatile emissions; these compounds contribute to biotic and abiotic stress defense against herbivores and pathogens. Catalyzes the conversion of (2E)-geranyl diphosphate (GPP) to (R)-linalool. The sequence is that of (R)-linalool synthase 1, chloroplastic from Picea sitchensis (Sitka spruce).